A 145-amino-acid chain; its full sequence is Large-conductance mechanosensitive channel (145 aa).

The next 2 membrane-spanning stretches (helical) occupy residues V14–L34 and G83–V103.

The protein belongs to the MscL family. Homopentamer.

It localises to the cell inner membrane. In terms of biological role, channel that opens in response to stretch forces in the membrane lipid bilayer. May participate in the regulation of osmotic pressure changes within the cell. The chain is Large-conductance mechanosensitive channel from Paracoccus denitrificans (strain Pd 1222).